The primary structure comprises 334 residues: Methionine adenosyltransferase 2 subunit beta (334 aa).

Residues 37-40, 60-62, 71-72, cysteine 93, arginine 97, tyrosine 159, and leucine 185 contribute to the NADP(+) site; these read TGLL, FRR, and NL. Position 309 is a phosphothreonine (threonine 309). The tract at residues 319 to 334 is required for interaction with MAT2A; sequence LWPFLIDKRWRQTVFH.

This sequence belongs to the dTDP-4-dehydrorhamnose reductase family. MAT2B subfamily. Heterotrimer; composed of a catalytic MAT2A homodimer that binds one regulatory MAT2B chain. Heterohexamer; composed of a central, catalytic MAT2A homotetramer flanked on either side by a regulatory MAT2B chain. NADP binding increases the affinity for MAT2A.

Its pathway is amino-acid biosynthesis; S-adenosyl-L-methionine biosynthesis; S-adenosyl-L-methionine from L-methionine: step 1/1. Regulatory subunit of S-adenosylmethionine synthetase 2, an enzyme that catalyzes the formation of S-adenosylmethionine from methionine and ATP. Regulates MAT2A catalytic activity by changing its kinetic properties, increasing its affinity for L-methionine. Can bind NADP (in vitro). The protein is Methionine adenosyltransferase 2 subunit beta (MAT2B) of Bos taurus (Bovine).